The primary structure comprises 197 residues: MIDFDGYRPNVGIVICNRKGQVLWAKRYGQNSWQFPQGGINEGETPEQAMFRELFEEVGLQKKDVRVLYASKLWLRYKLPKRLLRHDSKPMCIGQKQRWFLLQLVCHEKEIDMHRTKSPEFDGWRWVSFWYPVRQVISFKRDVYRRAMKEFAQFLFDPTKNDTALFQHHETKKAETGKKQPYYHKYAPQNKKGRKRR.

The 144-residue stretch at 6–149 folds into the Nudix hydrolase domain; the sequence is GYRPNVGIVI…KRDVYRRAMK (144 aa). Positions 38 to 59 match the Nudix box motif; that stretch reads GGINEGETPEQAMFRELFEEVG. Residues 170-197 form a disordered region; that stretch reads ETKKAETGKKQPYYHKYAPQNKKGRKRR.

It belongs to the Nudix hydrolase family. RppH subfamily. It depends on a divalent metal cation as a cofactor.

Its function is as follows. Accelerates the degradation of transcripts by removing pyrophosphate from the 5'-end of triphosphorylated RNA, leading to a more labile monophosphorylated state that can stimulate subsequent ribonuclease cleavage. This is RNA pyrophosphohydrolase from Actinobacillus succinogenes (strain ATCC 55618 / DSM 22257 / CCUG 43843 / 130Z).